Reading from the N-terminus, the 902-residue chain is MKIAVIGQSLFGQEVYCQLRKEGHEVVGVFTIPDKDGKADPLGLEAEKDGVPVFKFPRWRARGQALPEVVAKYQALGAELNVLPFCSQFIPMEVINAPRHGSIIYHPSLLPRHRGASAINWTLIHGDKKGGFTIFWADDGLDTGDLLLQKECDVLPDDTVSTLYNRFLFPEGIKGMVQAVRLIAEGTAPRRPQPEEGATYEGIQKKETAMINWDQPAEAIHNWIRGNDKVPGAWTEACGQKLTFFNSTLNTSGLVAQGEALPIPGAHRPGLVTKAGLILFGNDDRMLLVKNIQLEDGKMMPASQFFKGSASSALELTEEELATAEAVRSSWMRILPNVPEVEDSTDFFKSGAASVDVVRLVEEVKELCDGLELENEDVYMATTFGDFIQLLVRKLRGEDGESECVINYVEKAVKKLTLQMPYQLFIGGEFVDAEGAKTYSTINPTDGSVICQVSLAQVSDVDKAVAAAKEAFENGLWGKINARDRGRLLYRLADLMEQHQEELATIEALDAGAVYTLALKTHVGMSIQTFRYFAGWCDKIQGATIPINQARPNRNLTLTKKEPVGVCGIVIPWNYPLMMLSWKTAACLAAGNTVVIKPAQVTPLTALKFAELTLKAGIPKGVVNILPGSGSLVGQRLSDHPDVRKIGFTGSTEVGKHIMKSCALSNVKKVSLELGGKSPLIIFADCDLNKAVQMGMSSVFFNKGENCIAAGRLFVEDSIHDQFVQKVVEEVGKMKIGNPLDRDTNHGPQNHEAHLRKLVEYCQRGVKEGATLVCGGNQVPRPGFFFQPTVFTDVEDHMYIAKEESFGPIMIISRFADGDVDAVLSRANATEFGLASGVFTRDINKALYVSDKLQAGTVFVNTYNKTDVAAPFGGFKQSGFGKDLGEAALNEYLRIKTVTFEY.

Residues M1–A310 form a hydrolase domain region. A Phosphoserine modification is found at S9. N6-succinyllysine is present on K38. (6R)-10-formyltetrahydrofolate is bound at residue Q88 to I90. The Proton donor role is filled by H106. A (6R)-10-formyltetrahydrofolate-binding site is contributed by D142. In terms of domain architecture, Carrier spans E318 to L395. S354 carries the post-translational modification O-(pantetheine 4'-phosphoryl)serine. Residues T417–Y902 form an aldehyde dehydrogenase domain region. Residues I571 to W573 and K597 to Q600 each bind NADP(+). Phosphoserine occurs at positions 629 and 631. NADP(+) contacts are provided by residues G630 to Q635 and G650 to S651. N6-succinyllysine is present on K660. Residue E673 is the Proton acceptor of the active site. E673–L674 provides a ligand contact to NADP(+). The active-site Proton donor is the C707. K757 is an NADP(+) binding site. An N6-succinyllysine modification is found at K767. E804–F806 serves as a coordination point for NADP(+). A Phosphoserine modification is found at S825. N6-acetyllysine is present on K882.

In the N-terminal section; belongs to the GART family. It in the C-terminal section; belongs to the aldehyde dehydrogenase family. ALDH1L subfamily. Homotetramer. Phosphopantetheinylation at Ser-354 by AASDHPPT is required for the formyltetrahydrofolate dehydrogenase activity. As to expression, highly expressed in liver (at protein level). Also expressed in pancreas, brain and lung (at protein level).

The protein resides in the cytoplasm. It localises to the cytosol. The catalysed reaction is (6R)-10-formyltetrahydrofolate + NADP(+) + H2O = (6S)-5,6,7,8-tetrahydrofolate + CO2 + NADPH + H(+). Cytosolic 10-formyltetrahydrofolate dehydrogenase that catalyzes the NADP(+)-dependent conversion of 10-formyltetrahydrofolate to tetrahydrofolate and carbon dioxide. May also have an NADP(+)-dependent aldehyde dehydrogenase activity towards formaldehyde, acetaldehyde, propionaldehyde, and benzaldehyde. The chain is Cytosolic 10-formyltetrahydrofolate dehydrogenase from Mus musculus (Mouse).